The sequence spans 692 residues: Elongation factor G (692 aa).

Positions glutamate 8 to leucine 282 constitute a tr-type G domain. Residues alanine 17–threonine 24, aspartate 81–histidine 85, and asparagine 135–aspartate 138 each bind GTP.

The protein belongs to the TRAFAC class translation factor GTPase superfamily. Classic translation factor GTPase family. EF-G/EF-2 subfamily.

The protein localises to the cytoplasm. Catalyzes the GTP-dependent ribosomal translocation step during translation elongation. During this step, the ribosome changes from the pre-translocational (PRE) to the post-translocational (POST) state as the newly formed A-site-bound peptidyl-tRNA and P-site-bound deacylated tRNA move to the P and E sites, respectively. Catalyzes the coordinated movement of the two tRNA molecules, the mRNA and conformational changes in the ribosome. This is Elongation factor G from Streptococcus agalactiae serotype Ia (strain ATCC 27591 / A909 / CDC SS700).